A 189-amino-acid polypeptide reads, in one-letter code: Crossover junction endodeoxyribonuclease RuvC (189 aa).

Catalysis depends on residues aspartate 7, glutamate 68, and aspartate 141. Residues aspartate 7, glutamate 68, and aspartate 141 each coordinate Mg(2+).

This sequence belongs to the RuvC family. Homodimer which binds Holliday junction (HJ) DNA. The HJ becomes 2-fold symmetrical on binding to RuvC with unstacked arms; it has a different conformation from HJ DNA in complex with RuvA. In the full resolvosome a probable DNA-RuvA(4)-RuvB(12)-RuvC(2) complex forms which resolves the HJ. Mg(2+) is required as a cofactor.

It localises to the cytoplasm. It catalyses the reaction Endonucleolytic cleavage at a junction such as a reciprocal single-stranded crossover between two homologous DNA duplexes (Holliday junction).. Its function is as follows. The RuvA-RuvB-RuvC complex processes Holliday junction (HJ) DNA during genetic recombination and DNA repair. Endonuclease that resolves HJ intermediates. Cleaves cruciform DNA by making single-stranded nicks across the HJ at symmetrical positions within the homologous arms, yielding a 5'-phosphate and a 3'-hydroxyl group; requires a central core of homology in the junction. The consensus cleavage sequence is 5'-(A/T)TT(C/G)-3'. Cleavage occurs on the 3'-side of the TT dinucleotide at the point of strand exchange. HJ branch migration catalyzed by RuvA-RuvB allows RuvC to scan DNA until it finds its consensus sequence, where it cleaves and resolves the cruciform DNA. The protein is Crossover junction endodeoxyribonuclease RuvC of Nocardia farcinica (strain IFM 10152).